The sequence spans 494 residues: MTATAPVKTEYEAVIGLETHVQLGTATKIFSNASTEFGADPNTHIDPVVLGLPGTLPVLNQKVLEYAVKAGLALNCQIAPYSKFDRKQYFYPDLPKNYQISQYDLPIAEHGWIEIEVAEKGKEPYTKKIGVTRLHMEEDAGKLVHAGSDRLAGSTHSLVDYNRAGVALAEIVSEPDLRTGKEAAEYAQELRRIMRYLGVSDGNMAEGSLRCDVNISIRPKGTEKFGTKVEIKYMNSFNAIQRAIEFEIERQIRCLETGEPIVQETRLWDEGKQVTKSMRSKEGSSDYRYFPEPDLGPIEVSETQRETWRSELPELPAQKRHRYAEQYGLSAYDARVLTDEKSTADYYEATVAAGADAKQAANWLMGDIAAYVNANKLLVSDLPLQPQDLAELVNLIEAGTISGKIAKEILPELLEKGGSPKAIVEAKGLTQISDPAQIEALVDELLAAHPTELEQFRAGKTKLQGFFVGQLMKKTGGRVDPKLSNQILNQKLKG.

It belongs to the GatB/GatE family. GatB subfamily. In terms of assembly, heterotrimer of A, B and C subunits.

The catalysed reaction is L-glutamyl-tRNA(Gln) + L-glutamine + ATP + H2O = L-glutaminyl-tRNA(Gln) + L-glutamate + ADP + phosphate + H(+). The enzyme catalyses L-aspartyl-tRNA(Asn) + L-glutamine + ATP + H2O = L-asparaginyl-tRNA(Asn) + L-glutamate + ADP + phosphate + 2 H(+). Its function is as follows. Allows the formation of correctly charged Asn-tRNA(Asn) or Gln-tRNA(Gln) through the transamidation of misacylated Asp-tRNA(Asn) or Glu-tRNA(Gln) in organisms which lack either or both of asparaginyl-tRNA or glutaminyl-tRNA synthetases. The reaction takes place in the presence of glutamine and ATP through an activated phospho-Asp-tRNA(Asn) or phospho-Glu-tRNA(Gln). This chain is Aspartyl/glutamyl-tRNA(Asn/Gln) amidotransferase subunit B, found in Synechococcus sp. (strain ATCC 27144 / PCC 6301 / SAUG 1402/1) (Anacystis nidulans).